Here is a 159-residue protein sequence, read N- to C-terminus: Early E3 18.5 kDa glycoprotein (159 aa).

Residues 1–17 form the signal peptide; sequence MRYMILGLLALAAVCSA. At 18-123 the chain is on the lumenal side; sequence AKKVEFKEPA…PPQKCLENTG (106 aa). Intrachain disulfides connect cysteine 28–cysteine 45 and cysteine 39–cysteine 100. 2 N-linked (GlcNAc...) asparagine; by host glycosylation sites follow: asparagine 29 and asparagine 78. The chain crosses the membrane as a helical span at residues 124 to 144; sequence TFCSTALLITALALVCTLLYL. Residues 145-159 are Cytoplasmic-facing; sequence KYKSRRSFIDEKKMP. The short motif at 156–159 is the Di-lysine motif element; that stretch reads KKMP.

It belongs to the adenoviridae E19 family. In terms of processing, both disulfide bonds are absolutely critical for the interaction with MHC antigens. Post-translationally, N-glycosylated; high-mannose.

Its subcellular location is the host endoplasmic reticulum membrane. Its function is as follows. Binds and retains class I heavy chains in the endoplasmic reticulum during the early period of virus infection, thereby impairing their transport to the cell surface. Also delays the expression of class I alleles that it cannot affect by direct retention. Binds transporters associated with antigen processing (TAP) and acts as a tapasin inhibitor, preventing class I/TAP association. In consequence, infected cells are masked for immune recognition by cytotoxic T-lymphocytes. This chain is Early E3 18.5 kDa glycoprotein, found in Homo sapiens (Human).